Reading from the N-terminus, the 571-residue chain is Membrane protein insertase YidC (571 aa).

The chain crosses the membrane as a helical span at residues 4-24 (TRVFLIFAWLMVAVLLWMEWS). Positions 29–78 (APTPAPTTTSAPAAAQSVPGANPGAIPSAQVPGAPGQAAAQAQASATPAS) are disordered. Low complexity-rich tracts occupy residues 34 to 43 (PTTTSAPAAA) and 55 to 78 (PSAQVPGAPGQAAAQAQASATPAS). 4 consecutive transmembrane segments (helical) span residues 369–389 (LVGNWGWAIVGLVVLLKLVLY), 440–460 (GGCLPILIQMPIFFALYWVLV), 483–503 (YFILPVINVAVMWFTQKLTPA), and 518–538 (PLVFGVMMAFMPSGLVLYWVV).

It belongs to the OXA1/ALB3/YidC family. Type 1 subfamily. Interacts with the Sec translocase complex via SecD. Specifically interacts with transmembrane segments of nascent integral membrane proteins during membrane integration.

Its subcellular location is the cell inner membrane. Functionally, required for the insertion and/or proper folding and/or complex formation of integral membrane proteins into the membrane. Involved in integration of membrane proteins that insert both dependently and independently of the Sec translocase complex, as well as at least some lipoproteins. Aids folding of multispanning membrane proteins. This is Membrane protein insertase YidC from Stenotrophomonas maltophilia (strain K279a).